Consider the following 289-residue polypeptide: Phosphatidylserine decarboxylase proenzyme (289 aa).

Residues aspartate 89, histidine 146, and serine 252 each act as charge relay system; for autoendoproteolytic cleavage activity in the active site. Residue serine 252 is the Schiff-base intermediate with substrate; via pyruvic acid; for decarboxylase activity of the active site. A Pyruvic acid (Ser); by autocatalysis modification is found at serine 252.

It belongs to the phosphatidylserine decarboxylase family. PSD-B subfamily. Prokaryotic type I sub-subfamily. In terms of assembly, heterodimer of a large membrane-associated beta subunit and a small pyruvoyl-containing alpha subunit. Pyruvate serves as cofactor. Is synthesized initially as an inactive proenzyme. Formation of the active enzyme involves a self-maturation process in which the active site pyruvoyl group is generated from an internal serine residue via an autocatalytic post-translational modification. Two non-identical subunits are generated from the proenzyme in this reaction, and the pyruvate is formed at the N-terminus of the alpha chain, which is derived from the carboxyl end of the proenzyme. The autoendoproteolytic cleavage occurs by a canonical serine protease mechanism, in which the side chain hydroxyl group of the serine supplies its oxygen atom to form the C-terminus of the beta chain, while the remainder of the serine residue undergoes an oxidative deamination to produce ammonia and the pyruvoyl prosthetic group on the alpha chain. During this reaction, the Ser that is part of the protease active site of the proenzyme becomes the pyruvoyl prosthetic group, which constitutes an essential element of the active site of the mature decarboxylase.

The protein resides in the cell membrane. The enzyme catalyses a 1,2-diacyl-sn-glycero-3-phospho-L-serine + H(+) = a 1,2-diacyl-sn-glycero-3-phosphoethanolamine + CO2. Its pathway is phospholipid metabolism; phosphatidylethanolamine biosynthesis; phosphatidylethanolamine from CDP-diacylglycerol: step 2/2. Catalyzes the formation of phosphatidylethanolamine (PtdEtn) from phosphatidylserine (PtdSer). This chain is Phosphatidylserine decarboxylase proenzyme, found in Shewanella sp. (strain W3-18-1).